The sequence spans 77 residues: Acyl carrier protein (77 aa).

The region spanning 2–77 (STVEERVKKI…DAIDYIVAHT (76 aa)) is the Carrier domain. Position 37 is an O-(pantetheine 4'-phosphoryl)serine (Ser37).

This sequence belongs to the acyl carrier protein (ACP) family. 4'-phosphopantetheine is transferred from CoA to a specific serine of apo-ACP by AcpS. This modification is essential for activity because fatty acids are bound in thioester linkage to the sulfhydryl of the prosthetic group.

Its subcellular location is the cytoplasm. The protein operates within lipid metabolism; fatty acid biosynthesis. Carrier of the growing fatty acid chain in fatty acid biosynthesis. This Marinobacter nauticus (strain ATCC 700491 / DSM 11845 / VT8) (Marinobacter aquaeolei) protein is Acyl carrier protein.